The primary structure comprises 261 residues: Probable cyclic nucleotide phosphodiesterase PSM_A2567 (261 aa).

Fe cation is bound by residues Asp22, His24, Asp62, Asn94, His160, His198, and His200. Residues His24, Asp62, and Asn94–His95 contribute to the AMP site. His200 provides a ligand contact to AMP.

The protein belongs to the cyclic nucleotide phosphodiesterase class-III family. Fe(2+) is required as a cofactor.

In Pseudoalteromonas sp. (strain SM9913), this protein is Probable cyclic nucleotide phosphodiesterase PSM_A2567.